The primary structure comprises 154 residues: Xanthine-guanine phosphoribosyltransferase (154 aa).

Residues 38–39 (RG), Lys-71, and 90–98 (DDLVDTGGT) contribute to the 5-phospho-alpha-D-ribose 1-diphosphate site. Residue Lys-71 coordinates GMP. A Mg(2+)-binding site is contributed by Asp-91. Residues Asp-94 and Ile-137 each contribute to the guanine site. The xanthine site is built by Asp-94 and Ile-137. Residues 94–98 (DTGGT) and 136–137 (WI) each bind GMP.

This sequence belongs to the purine/pyrimidine phosphoribosyltransferase family. XGPT subfamily. Homotetramer. The cofactor is Mg(2+).

It is found in the cell inner membrane. The catalysed reaction is GMP + diphosphate = guanine + 5-phospho-alpha-D-ribose 1-diphosphate. It carries out the reaction XMP + diphosphate = xanthine + 5-phospho-alpha-D-ribose 1-diphosphate. It catalyses the reaction IMP + diphosphate = hypoxanthine + 5-phospho-alpha-D-ribose 1-diphosphate. It participates in purine metabolism; GMP biosynthesis via salvage pathway; GMP from guanine: step 1/1. Its pathway is purine metabolism; XMP biosynthesis via salvage pathway; XMP from xanthine: step 1/1. Functionally, purine salvage pathway enzyme that catalyzes the transfer of the ribosyl-5-phosphate group from 5-phospho-alpha-D-ribose 1-diphosphate (PRPP) to the N9 position of the 6-oxopurines guanine and xanthine to form the corresponding ribonucleotides GMP (guanosine 5'-monophosphate) and XMP (xanthosine 5'-monophosphate), with the release of PPi. To a lesser extent, also acts on hypoxanthine. The sequence is that of Xanthine-guanine phosphoribosyltransferase from Buchnera aphidicola subsp. Schizaphis graminum (strain Sg).